The sequence spans 782 residues: Translation initiation factor IF-2 (782 aa).

Basic and acidic residues predominate over residues 1-14; the sequence is MSKNIDDKNEDGKK. Disordered stretches follow at residues 1-106 and 132-174; these read MSKN…KKTY and SIVS…AETE. Residues 15 to 25 show a composition bias toward basic residues; the sequence is IKIIKLRKKVV. The segment covering 31–43 has biased composition (polar residues); the sequence is NDLSGKNNPSGST. Residues 44-61 show a composition bias toward basic and acidic residues; that stretch reads DLHKHNNKVEYSHSRDGR. 2 stretches are compositionally biased toward polar residues: residues 86–106 and 133–142; these read GYSQNRDSLTSQYQGSTKKTY and IVSSASSTDS. The span at 143–159 shows a compositional bias: basic and acidic residues; the sequence is ENSKELNRKLGEKKKQQ. The 174-residue stretch at 280-453 folds into the tr-type G domain; the sequence is EKPPVITIMG…DMMLLKANPS (174 aa). Residues 289–296 are G1; that stretch reads GHVDHGKT. 289 to 296 contacts GTP; it reads GHVDHGKT. A G2 region spans residues 314-318; sequence GITQH. Positions 335–338 are G3; sequence DTPG. Residues 335–339 and 389–392 each bind GTP; these read DTPGH and NKID. The tract at residues 389–392 is G4; sequence NKID. Positions 425 to 427 are G5; that stretch reads SAL.

This sequence belongs to the TRAFAC class translation factor GTPase superfamily. Classic translation factor GTPase family. IF-2 subfamily.

It localises to the cytoplasm. Its function is as follows. One of the essential components for the initiation of protein synthesis. Protects formylmethionyl-tRNA from spontaneous hydrolysis and promotes its binding to the 30S ribosomal subunits. Also involved in the hydrolysis of GTP during the formation of the 70S ribosomal complex. This chain is Translation initiation factor IF-2, found in Borreliella afzelii (strain PKo) (Borrelia afzelii).